An 83-amino-acid chain; its full sequence is uncharacterized protein (83 aa).

A helical membrane pass occupies residues 58-78 (AVLLWIAIIATLGNIVVVGVV).

It localises to the membrane. This is an uncharacterized protein from Homo sapiens (Human).